A 582-amino-acid polypeptide reads, in one-letter code: Formate--tetrahydrofolate ligase (582 aa).

65–72 provides a ligand contact to ATP; it reads TPLGEGKT.

The protein belongs to the formate--tetrahydrofolate ligase family.

The enzyme catalyses (6S)-5,6,7,8-tetrahydrofolate + formate + ATP = (6R)-10-formyltetrahydrofolate + ADP + phosphate. Its pathway is one-carbon metabolism; tetrahydrofolate interconversion. The polypeptide is Formate--tetrahydrofolate ligase (Vibrio vulnificus (strain CMCP6)).